The chain runs to 264 residues: Carbonic anhydrase 7 (264 aa).

The region spanning 5–262 is the Alpha-carbonic anhydrase domain; it reads HGWGYGQDDG…LKGRVVKASF (258 aa). His-66 functions as the Proton donor/acceptor in the catalytic mechanism. Positions 96, 98, and 121 each coordinate Zn(2+). 201-202 is a substrate binding site; it reads TT.

This sequence belongs to the alpha-carbonic anhydrase family. The cofactor is Zn(2+).

The protein resides in the cytoplasm. The enzyme catalyses hydrogencarbonate + H(+) = CO2 + H2O. With respect to regulation, activated by histamine, L-adrenaline, L- and D-histidine, and L- and D-phenylalanine. Inhibited by coumarins, sulfonamide derivatives such as acetazolamide (AZA), by saccharin and Foscarnet (phosphonoformate trisodium salt). Its function is as follows. Reversible hydration of carbon dioxide. This is Carbonic anhydrase 7 (CA7) from Homo sapiens (Human).